Reading from the N-terminus, the 83-residue chain is uncharacterized protein (83 aa).

Belongs to the chlamydial CPn_0710/CT_666/TC_0037 family.

This is an uncharacterized protein from Chlamydia trachomatis serovar D (strain ATCC VR-885 / DSM 19411 / UW-3/Cx).